Reading from the N-terminus, the 325-residue chain is AAAWMLNGCLQVMDSRTIPANRNADNVDPALQTATHLCFPTRPVRVQDVRAFILTSFGFGQKGGQVVGVAPKYFFATLDEEVYKDYSVRVTKRSKTADRAYAKALMSNAIVKVQDHSPYEQEDQSRIFMDPLSRITEDAETGSYHFDTKDIRNVADVKARLTRLVRGERLNARPDAASGLAQAARSAQAWIEKQTGGRSSVDTSTVGIDLVDLSAFSAHENETFIERNFTEQEKAFAKQSLDQKMAFASRWAAKEAVFKCLHTQTKGAGAAMKDIEIVKSDNAPQGQAGRKAGLEDIQLSISHGEDCLIAVAIGIAGNGPAKYTL.

D209 contributes to the Mg(2+) binding site. Residues 209–211, 255–265, 279–282, and 301–303 contribute to the acetyl-CoA site; these read DLV, EAVFKCLHTQT, KSDN, and ISH. Position 302 (S302) interacts with Mg(2+).

The protein belongs to the thiolase-like superfamily. Fungal fatty acid synthetase subunit alpha family. As to quaternary structure, [Alpha(6)beta(6)] hexamers of two multifunctional subunits (alpha and beta). 4'-phosphopantetheine is transferred from CoA to a specific serine of the acyl carrier domain by the C-terminal PPT domain. This modification is essential for activity because fatty acids are bound in thioester linkage to the sulfhydryl of the prosthetic group.

It catalyses the reaction acetyl-CoA + n malonyl-CoA + 2n NADPH + 4n H(+) = a long-chain-acyl-CoA + n CoA + n CO2 + 2n NADP(+).. The catalysed reaction is a fatty acyl-[ACP] + malonyl-[ACP] + H(+) = a 3-oxoacyl-[ACP] + holo-[ACP] + CO2. The enzyme catalyses a (3R)-hydroxyacyl-[ACP] + NADP(+) = a 3-oxoacyl-[ACP] + NADPH + H(+). Its pathway is mycotoxin biosynthesis. In terms of biological role, fatty acid synthase alpha subunit; part of the fragmented gene cluster that mediates the biosynthesis of dothistromin (DOTH), a polyketide toxin very similar in structure to the aflatoxin precursor, versicolorin B. The first step of the pathway is the conversion of acetate to norsolorinic acid (NOR) and requires the fatty acid synthase subunits hexA and hexB, as well as the polyketide synthase pksA. PksA combines a hexanoyl starter unit and 7 malonyl-CoA extender units to synthesize the precursor NOR. The hexanoyl starter unit is provided to the acyl-carrier protein (ACP) domain by the fungal fatty acid synthase hexA/hexB. The second step is the conversion of NOR to averantin (AVN) and requires the norsolorinic acid ketoreductase nor1, which catalyzes the dehydration of norsolorinic acid to form (1'S)-averantin. The cytochrome P450 monooxygenase avnA then catalyzes the hydroxylation of AVN to 5'hydroxyaverantin (HAVN). The next step is performed by adhA that transforms HAVN to averufin (AVF). Averufin might then be converted to hydroxyversicolorone by cypX and avfA. Hydroxyversicolorone is further converted versiconal hemiacetal acetate (VHA) by moxY. VHA is then the substrate for the versiconal hemiacetal acetate esterase est1 to yield versiconal (VAL). Versicolorin B synthase vbsA then converts VAL to versicolorin B (VERB) by closing the bisfuran ring. Then, the activity of the versicolorin B desaturase verB leads to versicolorin A (VERA). DotB, a predicted chloroperoxidase, may perform epoxidation of the A-ring of VERA. Alternatively, a cytochrome P450, such as cypX or avnA could catalyze this step. It is also possible that another, uncharacterized, cytochrome P450 enzyme is responsible for this step. Opening of the epoxide could potentially be achieved by the epoxide hydrolase epoA. However, epoA seems not to be required for DOTH biosynthesis, but other epoxide hydrolases may have the ability to complement this hydrolysis. Alternatively, opening of the epoxide ring could be achieved non-enzymatically. The next step is the deoxygenation of ring A to yield the 5,8-dihydroxyanthraquinone which is most likely catalyzed by the NADPH dehydrogenase encoded by ver1. The last stages of DOTH biosynthesis are proposed to involve hydroxylation of the bisfuran. OrdB and norB might have oxidative roles here. An alternative possibility is that cytochrome P450 monoogenases such as avnA and cypX might perform these steps in addition to previously proposed steps. The polypeptide is Fatty acid synthase alpha subunit hexA (Dothistroma septosporum (Red band needle blight fungus)).